The primary structure comprises 131 residues: Transcriptional activatory protein CaiF (131 aa).

In terms of biological role, potential transcriptional activator of carnitine metabolism. The chain is Transcriptional activatory protein CaiF (caiF) from Escherichia coli (strain K12).